Reading from the N-terminus, the 304-residue chain is Acetylglutamate kinase (304 aa).

Residues 77–78, R99, and N193 each bind substrate; that span reads GG.

It belongs to the acetylglutamate kinase family. ArgB subfamily.

The protein resides in the cytoplasm. The catalysed reaction is N-acetyl-L-glutamate + ATP = N-acetyl-L-glutamyl 5-phosphate + ADP. It participates in amino-acid biosynthesis; L-arginine biosynthesis; N(2)-acetyl-L-ornithine from L-glutamate: step 2/4. Functionally, catalyzes the ATP-dependent phosphorylation of N-acetyl-L-glutamate. This Pelodictyon phaeoclathratiforme (strain DSM 5477 / BU-1) protein is Acetylglutamate kinase.